Here is a 141-residue protein sequence, read N- to C-terminus: Hemoglobin subunit alpha-3 (141 aa).

Residues 1-141 form the Globin domain; sequence VLSPADKTNV…VSTVLTSKYR (141 aa). His58 provides a ligand contact to O2. Residue His87 participates in heme b binding.

Belongs to the globin family. Heterotetramer of two alpha chains and two beta chains. Red blood cells.

In terms of biological role, involved in oxygen transport from the lung to the various peripheral tissues. The protein is Hemoglobin subunit alpha-3 of Gorilla gorilla gorilla (Western lowland gorilla).